The following is a 358-amino-acid chain: Probable tartrate dehydrogenase/decarboxylase TtuC' (358 aa).

Mn(2+) contacts are provided by Asp-222, Asp-246, and Asp-250.

This sequence belongs to the isocitrate and isopropylmalate dehydrogenases family. The cofactor is Mg(2+). Mn(2+) is required as a cofactor. K(+) serves as cofactor.

Its subcellular location is the cytoplasm. It carries out the reaction tartrate + NAD(+) = 2-hydroxy-3-oxosuccinate + NADH + H(+). The enzyme catalyses (2R,3S)-tartrate + NAD(+) = 2-hydroxy-3-oxosuccinate + NADH + H(+). The catalysed reaction is (2R,3R)-tartrate + NAD(+) = 2-hydroxy-3-oxosuccinate + NADH + H(+). It catalyses the reaction (2R,3R)-tartrate + H(+) = (R)-glycerate + CO2. It carries out the reaction (R)-malate + NAD(+) = pyruvate + CO2 + NADH. The protein operates within carbohydrate acid metabolism; tartrate degradation; 2-hydroxy-3-oxosuccinate from L-tartrate: step 1/1. It participates in carbohydrate acid metabolism; tartrate degradation; 2-hydroxy-3-oxosuccinate from meso-tartrate: step 1/1. It functions in the pathway carbohydrate acid metabolism; tartrate degradation; D-glycerate from L-tartrate: step 1/1. In terms of biological role, has multiple catalytic activities. Apart from catalyzing the oxidation of (+)-tartrate to oxaloglycolate, also converts meso-tartrate to D-glycerate and catalyzes the oxidative decarboxylation of D-malate to pyruvate. This chain is Probable tartrate dehydrogenase/decarboxylase TtuC' (ttuC'), found in Agrobacterium vitis (Rhizobium vitis).